A 100-amino-acid polypeptide reads, in one-letter code: MLGSPLREYELLVSLGSEFEPEAESRVRSLFTPVEPEGVTVKHLDVLGIRKFAYEIKGRNDGVCVVVRFLANAGSIAEIGRQMRLTEDVIRTKLLRVGRK.

The protein belongs to the bacterial ribosomal protein bS6 family.

Binds together with bS18 to 16S ribosomal RNA. The polypeptide is Small ribosomal subunit protein bS6 (Tropheryma whipplei (strain Twist) (Whipple's bacillus)).